We begin with the raw amino-acid sequence, 411 residues long: LL-diaminopimelate aminotransferase 1 (411 aa).

Substrate contacts are provided by Y15 and G42. Pyridoxal 5'-phosphate is bound by residues Y72, 108-109 (SK), Y132, N187, Y218, and 246-248 (SFS). K109, Y132, and N187 together coordinate substrate. K249 carries the N6-(pyridoxal phosphate)lysine modification. Pyridoxal 5'-phosphate-binding residues include R257 and N292. Substrate-binding residues include N292 and R388.

This sequence belongs to the class-I pyridoxal-phosphate-dependent aminotransferase family. LL-diaminopimelate aminotransferase subfamily. As to quaternary structure, homodimer. Pyridoxal 5'-phosphate is required as a cofactor.

The catalysed reaction is (2S,6S)-2,6-diaminopimelate + 2-oxoglutarate = (S)-2,3,4,5-tetrahydrodipicolinate + L-glutamate + H2O + H(+). The protein operates within amino-acid biosynthesis; L-lysine biosynthesis via DAP pathway; LL-2,6-diaminopimelate from (S)-tetrahydrodipicolinate (aminotransferase route): step 1/1. Involved in the synthesis of meso-diaminopimelate (m-DAP or DL-DAP), required for both lysine and peptidoglycan biosynthesis. Catalyzes the direct conversion of tetrahydrodipicolinate to LL-diaminopimelate. This chain is LL-diaminopimelate aminotransferase 1, found in Nostoc sp. (strain PCC 7120 / SAG 25.82 / UTEX 2576).